A 743-amino-acid chain; its full sequence is Alpha-N-acetylglucosaminidase (743 aa).

The N-terminal stretch at 1-23 (MEAVAVAAAVGVLLLAGAGGAAG) is a signal peptide. N-linked (GlcNAc...) asparagine glycosylation is found at N261, N272, N435, N503, N526, and N532.

It belongs to the glycosyl hydrolase 89 family. In terms of assembly, monomer and homodimer. In terms of tissue distribution, liver, ovary, peripheral blood leukocytes, testis, prostate, spleen, colon, lung, placenta and kidney.

It is found in the lysosome. The catalysed reaction is Hydrolysis of terminal non-reducing N-acetyl-D-glucosamine residues in N-acetyl-alpha-D-glucosaminides.. In terms of biological role, involved in the degradation of heparan sulfate. In Homo sapiens (Human), this protein is Alpha-N-acetylglucosaminidase (NAGLU).